Consider the following 341-residue polypeptide: L-threonine 3-dehydrogenase (341 aa).

Residue C38 participates in Zn(2+) binding. Active-site charge relay system residues include T40 and H43. Zn(2+) is bound by residues H63, E64, C93, C96, C99, and C107. Residues I175, D195, R200, 262–264 (LGI), and 286–287 (IY) contribute to the NAD(+) site.

Belongs to the zinc-containing alcohol dehydrogenase family. As to quaternary structure, homotetramer. The cofactor is Zn(2+).

The protein resides in the cytoplasm. It carries out the reaction L-threonine + NAD(+) = (2S)-2-amino-3-oxobutanoate + NADH + H(+). It participates in amino-acid degradation; L-threonine degradation via oxydo-reductase pathway; glycine from L-threonine: step 1/2. Its function is as follows. Catalyzes the NAD(+)-dependent oxidation of L-threonine to 2-amino-3-ketobutyrate. The polypeptide is L-threonine 3-dehydrogenase (Shewanella frigidimarina (strain NCIMB 400)).